Consider the following 100-residue polypeptide: Small ribosomal subunit protein eS24 (100 aa).

Belongs to the eukaryotic ribosomal protein eS24 family.

The protein is Small ribosomal subunit protein eS24 of Methanothermobacter thermautotrophicus (strain ATCC 29096 / DSM 1053 / JCM 10044 / NBRC 100330 / Delta H) (Methanobacterium thermoautotrophicum).